We begin with the raw amino-acid sequence, 263 residues long: 22 kDa alpha-zein 16 (263 aa).

An N-terminal signal peptide occupies residues 1–21; that stretch reads MATKILALLALLALLVSATNA.

This sequence belongs to the zein family. Expressed in developing endosperm.

Zeins are major seed storage proteins. The polypeptide is 22 kDa alpha-zein 16 (Zea mays (Maize)).